A 211-amino-acid polypeptide reads, in one-letter code: Mediator-associated protein 2 (211 aa).

The segment at glutamine 128–glutamate 211 is disordered. Residues serine 134–serine 148 show a composition bias toward low complexity. Serine 173 is modified (phosphoserine). Residues serine 189–glutamate 198 show a composition bias toward low complexity. Basic residues predominate over residues lysine 202–glutamate 211.

As to quaternary structure, associated with the Mediator complex.

It localises to the nucleus. This is Mediator-associated protein 2 from Arabidopsis thaliana (Mouse-ear cress).